The sequence spans 462 residues: tRNA pseudouridine(32) synthase, mitochondrial (462 aa).

Residues Met1–Asn24 constitute a mitochondrion transit peptide. Residues Lys127–Ile188 enclose the S4 RNA-binding domain. Asp238 is a catalytic residue.

It belongs to the pseudouridine synthase RluA family.

The protein resides in the mitochondrion. It carries out the reaction uridine(32) in tRNA = pseudouridine(32) in tRNA. Responsible for synthesis of pseudouridine from uracil-32 in mitochondrial transfer RNAs. The sequence is that of tRNA pseudouridine(32) synthase, mitochondrial (PUS9) from Saccharomyces cerevisiae (strain ATCC 204508 / S288c) (Baker's yeast).